A 169-amino-acid polypeptide reads, in one-letter code: Disulfide bond formation protein B 1 (169 aa).

At 1 to 13 (MSALLKPLDNRLF) the chain is on the cytoplasmic side. The chain crosses the membrane as a helical span at residues 14 to 30 (WPAVAIGGLLILAFVLY). Topologically, residues 31 to 48 (LQHVRGFAPCSLCIFIRL) are periplasmic. A disulfide bridge connects residues Cys40 and Cys43. Residues 49–64 (DVLGLVLAGIVGSLAP) form a helical membrane-spanning segment. Topologically, residues 65-71 (RSRIAGG) are cytoplasmic. A helical membrane pass occupies residues 72–89 (IAALGMLAASLGGIYHAW). Topologically, residues 90–145 (SLVAEEKLAAQGMGSCKMFMGFPEWIPLDTWLPQVFQPEGLCGEVVWTLLGQSMAV) are periplasmic. An intrachain disulfide couples Cys105 to Cys131. Residues 146 to 164 (WSLALFVFCLLVLAAKLAF) traverse the membrane as a helical segment. Topologically, residues 165-169 (GRRTA) are cytoplasmic.

It belongs to the DsbB family.

It localises to the cell inner membrane. In terms of biological role, required for disulfide bond formation in some periplasmic proteins. Acts by oxidizing the DsbA protein. The sequence is that of Disulfide bond formation protein B 1 from Pseudomonas aeruginosa (strain UCBPP-PA14).